Reading from the N-terminus, the 350-residue chain is MFIKGRAPRAPPRERRRATRGGLRQVVAPPRALGSTSRPHFRRASVCRRRCRKSGGLLAASRKMAAAAVNGAAGFSSSGPAATSGAVLQAATGMYEQLKGEWNRKSPNLSKCGEELGRLKLVLLELNFLPTTGTKLTKQQLILARDILEIGAQWSILRKDIPSFERYMAQLKCYYFDYKEQLPESAYMHQLLGLNLLFLLSQNRVAEFHTELERLPAKDIQTNVYIKHPVSLEQYLMEGSYNKVFLAKGNIPAESYTFFIDILLDTIRDEIAGCIEKAYEKILFTEATRILFFNTPKKMTDYAKKRGWVLGPNNYYSFASQQQKPEDTTIPSTELAKQVIEYARQLEMIV.

Residues 1-24 form a disordered region; the sequence is MFIKGRAPRAPPRERRRATRGGLR. S106 bears the Phosphoserine mark. The region spanning 162–331 is the PCI domain; the sequence is PSFERYMAQL…QQKPEDTTIP (170 aa). K297 participates in a covalent cross-link: Glycyl lysine isopeptide (Lys-Gly) (interchain with G-Cter in SUMO2).

This sequence belongs to the proteasome subunit S14 family. In terms of assembly, component of the 19S proteasome regulatory particle complex. The 26S proteasome consists of a 20S core particle (CP) and two 19S regulatory subunits (RP). The regulatory particle is made of a lid composed of 9 subunits including PSMD8, a base containing 6 ATPases and few additional components. Interacts with DDI2. Interacts with TASOR.

Component of the 26S proteasome, a multiprotein complex involved in the ATP-dependent degradation of ubiquitinated proteins. This complex plays a key role in the maintenance of protein homeostasis by removing misfolded or damaged proteins, which could impair cellular functions, and by removing proteins whose functions are no longer required. Therefore, the proteasome participates in numerous cellular processes, including cell cycle progression, apoptosis, or DNA damage repair. The protein is 26S proteasome non-ATPase regulatory subunit 8 (PSMD8) of Homo sapiens (Human).